Consider the following 273-residue polypeptide: Kit ligand (273 aa).

The signal sequence occupies residues Met1–Thr25. At Lys26–Gln214 the chain is on the extracellular side. Disulfide bonds link Cys29–Cys114 and Cys68–Cys163. N-linked (GlcNAc...) asparagine glycosylation is found at Asn90, Asn97, Asn145, and Asn195. The disordered stretch occupies residues Ala190–Asp210. The segment covering Ser191–Arg202 has biased composition (low complexity). Residues Trp215–Trp237 traverse the membrane as a helical segment. Topologically, residues Lys238 to Val273 are cytoplasmic.

The protein belongs to the SCF family. Homodimer, non-covalently linked. Heterotetramer with KIT, binding two KIT molecules; thereby mediates KIT dimerization and subsequent activation by autophosphorylation. A soluble form is produced by proteolytic processing of isoform 1 in the extracellular domain. As to expression, expressed in the cochlea.

The protein resides in the cell membrane. It is found in the cytoplasm. Its subcellular location is the cytoskeleton. The protein localises to the cell projection. It localises to the lamellipodium. The protein resides in the filopodium. It is found in the secreted. In terms of biological role, ligand for the receptor-type protein-tyrosine kinase KIT. Plays an essential role in the regulation of cell survival and proliferation, hematopoiesis, stem cell maintenance, gametogenesis, mast cell development, migration and function, and in melanogenesis. KITLG/SCF binding can activate several signaling pathways. Promotes phosphorylation of PIK3R1, the regulatory subunit of phosphatidylinositol 3-kinase, and subsequent activation of the kinase AKT1. KITLG/SCF and KIT also transmit signals via GRB2 and activation of RAS, RAF1 and the MAP kinases MAPK1/ERK2 and/or MAPK3/ERK1. KITLG/SCF and KIT promote activation of STAT family members STAT1, STAT3 and STAT5. KITLG/SCF and KIT promote activation of PLCG1, leading to the production of the cellular signaling molecules diacylglycerol and inositol 1,4,5-trisphosphate. KITLG/SCF acts synergistically with other cytokines, probably interleukins. This Mus musculus (Mouse) protein is Kit ligand (Kitlg).